The primary structure comprises 767 residues: Protein hunchback (767 aa).

Disordered stretches follow at residues 30–51 (EPGH…PIPS), 105–127 (QQQY…HLMG), and 174–212 (EKLQ…SNSS). The span at 39-51 (SVASSPRQSPIPS) shows a compositional bias: polar residues. The segment covering 105–117 (QQQYQQHFQAAQQ) has biased composition (low complexity). The segment covering 200 to 212 (EPEKEHDQMSNSS) has biased composition (basic and acidic residues). 4 C2H2-type zinc fingers span residues 242-264 (YKCK…TRTH), 271-293 (LQCP…IRKH), 299-321 (FQCD…RKSH), and 327-351 (YRCA…KYGH). 3 disordered regions span residues 357–424 (LDED…TSQL), 518–570 (QLQQ…QPQQ), and 610–704 (GVMT…APPS). Residues 386-397 (IASGGSGSGSGS) are compositionally biased toward gly residues. Over residues 518–527 (QLQQQNQQQS) the composition is skewed to low complexity. Over residues 528 to 537 (DNEEEEQDDE) the composition is skewed to acidic residues. Residues 661 to 704 (ANTSASSTASSSGNSSNASSNSNGNSSSNSSSSGTNSAAAAPPS) show a composition bias toward low complexity. 2 consecutive C2H2-type zinc fingers follow at residues 714-736 (YECK…MGYH) and 742-766 (FKCN…RNAH).

This sequence belongs to the hunchback C2H2-type zinc-finger protein family.

The protein localises to the nucleus. In terms of biological role, gap class segmentation protein that controls development of head structures. The sequence is that of Protein hunchback (hb) from Drosophila orena (Fruit fly).